Reading from the N-terminus, the 500-residue chain is Matrilin-1 (500 aa).

A signal peptide spans 1-29; that stretch reads MKVTSGPAFALCSLLLLLLLLLQVPDSLS. The region spanning 30–226 is the VWFA 1 domain; that stretch reads LVPQPRGHLC…AKKFQEAFCV (197 aa). An N-linked (GlcNAc...) asparagine glycan is attached at N80. Positions 227–267 constitute an EGF-like domain; the sequence is VSDLCATGDHDCEQLCVSSPGSYTCACHEGFTLNSDGKTCN. Cystine bridges form between C231–C242, C238–C251, and C253–C266. The region spanning 268 to 457 is the VWFA 2 domain; that stretch reads VCRGGGSGSA…GKKLQKQICV (190 aa). The N-linked (GlcNAc...) asparagine glycan is linked to N348. Residues 471–499 adopt a coiled-coil conformation; the sequence is EAKVEGLLQALTRKLEAVSGRLAVLENRI.

In terms of assembly, homotrimer. Part of a complex composed of MATN1 (via VWFA1 domain), type 2 collagens and type 6 collagens. Forms a complex (via covalent bonds) with ACAN; the interaction increases in abundance with increasing age of the organism via an increase in occupancy of MATN1 binding sites. Interacts with COMP. N-glycosylated; reduces binding affinity for type 2 collagens. As to expression, expressed in femoral head articular cartilage. Expressed in the trachea and extraskeletal tissue around the eye.

The protein resides in the secreted. It is found in the extracellular space. The protein localises to the extracellular matrix. In terms of biological role, a major component of the extracellular matrix of non-articular cartilage. Binds to type 2 collagens and forms long concatenated protein networks as part of the extracellular matrix. Required for the network-like organization and bundling of collagen fibrils surrounding chondrocytes in the zones of maturation and hypertrophy. Required for mechanotransduction and adaption to mechanical loading in cartilage chondrocytes, resulting in an increase in expression of the extracellular matrix components ACAN and COL2A1. Acts as a moderator of angiogenesis in response to injury. The protein is Matrilin-1 of Mus musculus (Mouse).